The sequence spans 463 residues: Phosphomannomutase (463 aa).

Ser-103 (phosphoserine intermediate) is an active-site residue. Ser-103, Asp-248, Asp-250, and Asp-252 together coordinate Mg(2+).

Belongs to the phosphohexose mutase family. The cofactor is Mg(2+).

It localises to the cell membrane. The enzyme catalyses alpha-D-mannose 1-phosphate = D-mannose 6-phosphate. It participates in nucleotide-sugar biosynthesis; GDP-alpha-D-mannose biosynthesis; alpha-D-mannose 1-phosphate from D-fructose 6-phosphate: step 2/2. The protein operates within bacterial outer membrane biogenesis; LPS O-antigen biosynthesis. Its function is as follows. Involved in GDP-mannose biosynthesis which serves as the activated sugar nucleotide precursor for mannose residues in cell surface polysaccharides. The chain is Phosphomannomutase (rfbB) from Vibrio cholerae serotype O1 (strain ATCC 39315 / El Tor Inaba N16961).